We begin with the raw amino-acid sequence, 328 residues long: Methionyl-tRNA formyltransferase (328 aa).

121–124 serves as a coordination point for (6S)-5,6,7,8-tetrahydrofolate; that stretch reads SLLP.

This sequence belongs to the Fmt family.

The catalysed reaction is L-methionyl-tRNA(fMet) + (6R)-10-formyltetrahydrofolate = N-formyl-L-methionyl-tRNA(fMet) + (6S)-5,6,7,8-tetrahydrofolate + H(+). Its function is as follows. Attaches a formyl group to the free amino group of methionyl-tRNA(fMet). The formyl group appears to play a dual role in the initiator identity of N-formylmethionyl-tRNA by promoting its recognition by IF2 and preventing the misappropriation of this tRNA by the elongation apparatus. The protein is Methionyl-tRNA formyltransferase of Burkholderia thailandensis (strain ATCC 700388 / DSM 13276 / CCUG 48851 / CIP 106301 / E264).